The following is a 353-amino-acid chain: Phospho-N-acetylmuramoyl-pentapeptide-transferase (353 aa).

10 helical membrane passes run 24–44 (LGFF…ILWA), 66–86 (TPTM…VLCA), 88–108 (LGNL…FVGF), 129–149 (FGML…KGLD), 160–180 (PLFE…FLST), 192–212 (GLAS…VYVA), 229–249 (VGEL…FLWY), 256–276 (VFMG…NAIV), 281–301 (ILLV…ILQV), and 330–350 (KVIV…LLSL).

Belongs to the glycosyltransferase 4 family. MraY subfamily. Requires Mg(2+) as cofactor.

It localises to the cell inner membrane. The catalysed reaction is UDP-N-acetyl-alpha-D-muramoyl-L-alanyl-gamma-D-glutamyl-meso-2,6-diaminopimeloyl-D-alanyl-D-alanine + di-trans,octa-cis-undecaprenyl phosphate = di-trans,octa-cis-undecaprenyl diphospho-N-acetyl-alpha-D-muramoyl-L-alanyl-D-glutamyl-meso-2,6-diaminopimeloyl-D-alanyl-D-alanine + UMP. The protein operates within cell wall biogenesis; peptidoglycan biosynthesis. In terms of biological role, catalyzes the initial step of the lipid cycle reactions in the biosynthesis of the cell wall peptidoglycan: transfers peptidoglycan precursor phospho-MurNAc-pentapeptide from UDP-MurNAc-pentapeptide onto the lipid carrier undecaprenyl phosphate, yielding undecaprenyl-pyrophosphoryl-MurNAc-pentapeptide, known as lipid I. The polypeptide is Phospho-N-acetylmuramoyl-pentapeptide-transferase (Helicobacter pylori (strain ATCC 700392 / 26695) (Campylobacter pylori)).